The primary structure comprises 477 residues: Aspartyl/glutamyl-tRNA(Asn/Gln) amidotransferase subunit B (477 aa).

The protein belongs to the GatB/GatE family. GatB subfamily. Heterotrimer of A, B and C subunits.

The enzyme catalyses L-glutamyl-tRNA(Gln) + L-glutamine + ATP + H2O = L-glutaminyl-tRNA(Gln) + L-glutamate + ADP + phosphate + H(+). It carries out the reaction L-aspartyl-tRNA(Asn) + L-glutamine + ATP + H2O = L-asparaginyl-tRNA(Asn) + L-glutamate + ADP + phosphate + 2 H(+). Functionally, allows the formation of correctly charged Asn-tRNA(Asn) or Gln-tRNA(Gln) through the transamidation of misacylated Asp-tRNA(Asn) or Glu-tRNA(Gln) in organisms which lack either or both of asparaginyl-tRNA or glutaminyl-tRNA synthetases. The reaction takes place in the presence of glutamine and ATP through an activated phospho-Asp-tRNA(Asn) or phospho-Glu-tRNA(Gln). In Bdellovibrio bacteriovorus (strain ATCC 15356 / DSM 50701 / NCIMB 9529 / HD100), this protein is Aspartyl/glutamyl-tRNA(Asn/Gln) amidotransferase subunit B.